Consider the following 310-residue polypeptide: Protein-L-isoaspartate O-methyltransferase (310 aa).

Disordered regions lie at residues 1 to 42 and 64 to 90; these read MSGE…AADK and SAAA…APSV. The segment covering 14–32 has biased composition (basic and acidic residues); sequence EDLKRAPRKSEGRAGERHA. The segment covering 64–81 has biased composition (low complexity); sequence SAAAKPATAPKPTALKPA. Serine 157 is an active-site residue.

It belongs to the methyltransferase superfamily. L-isoaspartyl/D-aspartyl protein methyltransferase family.

It is found in the cytoplasm. It catalyses the reaction [protein]-L-isoaspartate + S-adenosyl-L-methionine = [protein]-L-isoaspartate alpha-methyl ester + S-adenosyl-L-homocysteine. Catalyzes the methyl esterification of L-isoaspartyl residues in peptides and proteins that result from spontaneous decomposition of normal L-aspartyl and L-asparaginyl residues. It plays a role in the repair and/or degradation of damaged proteins. The chain is Protein-L-isoaspartate O-methyltransferase from Burkholderia lata (strain ATCC 17760 / DSM 23089 / LMG 22485 / NCIMB 9086 / R18194 / 383).